Here is a 76-residue protein sequence, read N- to C-terminus: Acyl carrier protein (76 aa).

In terms of domain architecture, Carrier spans methionine 1–glutamine 76. Serine 36 is modified (O-(pantetheine 4'-phosphoryl)serine).

Belongs to the acyl carrier protein (ACP) family. Post-translationally, 4'-phosphopantetheine is transferred from CoA to a specific serine of apo-ACP by AcpS. This modification is essential for activity because fatty acids are bound in thioester linkage to the sulfhydryl of the prosthetic group.

Its subcellular location is the cytoplasm. It participates in lipid metabolism; fatty acid biosynthesis. Functionally, carrier of the growing fatty acid chain in fatty acid biosynthesis. In Deinococcus deserti (strain DSM 17065 / CIP 109153 / LMG 22923 / VCD115), this protein is Acyl carrier protein.